The following is a 502-amino-acid chain: Aspartyl/glutamyl-tRNA(Asn/Gln) amidotransferase subunit B (502 aa).

Residues 272-293 are disordered; it reads TRHWHEDTRSTTSGRPKSDADD.

Belongs to the GatB/GatE family. GatB subfamily. In terms of assembly, heterotrimer of A, B and C subunits.

The enzyme catalyses L-glutamyl-tRNA(Gln) + L-glutamine + ATP + H2O = L-glutaminyl-tRNA(Gln) + L-glutamate + ADP + phosphate + H(+). It carries out the reaction L-aspartyl-tRNA(Asn) + L-glutamine + ATP + H2O = L-asparaginyl-tRNA(Asn) + L-glutamate + ADP + phosphate + 2 H(+). Its function is as follows. Allows the formation of correctly charged Asn-tRNA(Asn) or Gln-tRNA(Gln) through the transamidation of misacylated Asp-tRNA(Asn) or Glu-tRNA(Gln) in organisms which lack either or both of asparaginyl-tRNA or glutaminyl-tRNA synthetases. The reaction takes place in the presence of glutamine and ATP through an activated phospho-Asp-tRNA(Asn) or phospho-Glu-tRNA(Gln). This is Aspartyl/glutamyl-tRNA(Asn/Gln) amidotransferase subunit B from Paenarthrobacter aurescens (strain TC1).